The primary structure comprises 183 residues: Probable apo-citrate lyase phosphoribosyl-dephospho-CoA transferase (183 aa).

This sequence belongs to the CitX family.

It carries out the reaction apo-[citrate lyase ACP] + 2'-(5''-triphospho-alpha-D-ribosyl)-3'-dephospho-CoA = holo-[citrate lyase ACP] + diphosphate. Its function is as follows. Transfers 2-(5''-triphosphoribosyl)-3'-dephosphocoenzyme-A on a serine residue to the apo-acyl carrier protein (gamma chain) of the citrate lyase to yield holo-acyl carrier protein. The polypeptide is Probable apo-citrate lyase phosphoribosyl-dephospho-CoA transferase (Escherichia coli (strain 55989 / EAEC)).